The chain runs to 348 residues: Thioredoxin-related protein DsbJ (348 aa).

An N-terminal signal peptide occupies residues 1–32 (MILLQNIKRCSLKQLKVLATLLLSLSLPTLEA).

The protein localises to the periplasm. The sequence is that of Thioredoxin-related protein DsbJ (dsbJ) from Chlamydia pneumoniae (Chlamydophila pneumoniae).